A 400-amino-acid chain; its full sequence is Probable splicing factor YJU2B (400 aa).

Residues 1 to 26 (MGERKGVNKYYPPDFNPEKHGSLNRY) form a disordered region. The residue at position 40 (serine 40) is a Phosphoserine. A coiled-coil region spans residues 182–214 (LNSMLRKRFREKKKAMQEEEERDQALQAKASLA). The tract at residues 255–400 (WFPSTPGASA…VADYSGSESE (146 aa)) is disordered. Polar residues predominate over residues 283–292 (RRATPTSSPV). Serine 310 is subject to Phosphoserine. Residues 327–341 (EGTNQNRPVSPQDCS) are compositionally biased toward polar residues. Over residues 364 to 380 (PQPPPDTSPEAPNPQDT) the composition is skewed to pro residues.

The protein belongs to the CWC16 family.

Its subcellular location is the nucleus. May be involved in mRNA splicing. The sequence is that of Probable splicing factor YJU2B (YJU2B) from Bos taurus (Bovine).